Reading from the N-terminus, the 514-residue chain is Ammonium transporter 1 member 2 (514 aa).

Helical transmembrane passes span 56–76 (LLFS…LCAG), 91–111 (VLDA…FAFG), 140–160 (FFLY…GSIA), 165–185 (FVAY…TVSH), 212–232 (FAGS…GALV), 257–277 (VVLG…GSFL), 291–313 (GQWS…AALT), 328–348 (IDVC…CAVV), 351–371 (WAAI…NLLA), 380–400 (LEAA…TGLF), and 431–451 (IVQI…LFYG). A Phosphothreonine modification is found at T472.

The protein belongs to the ammonia transporter channel (TC 1.A.11.2) family. As to expression, high expression in root.

Its subcellular location is the membrane. Its function is as follows. Ammonium transporter probably involved in ammonium uptake from the soil. This is Ammonium transporter 1 member 2 (AMT1-2) from Arabidopsis thaliana (Mouse-ear cress).